Consider the following 92-residue polypeptide: MPRSLKKGPFIDLHLIKKVEAAIASNDRRPIKTWSRRSMILPEMVGLTLAVHNGRQHVPVLVNEEMVGHKLGEFAATRTYRGHAADKKAKKR.

It belongs to the universal ribosomal protein uS19 family.

Its function is as follows. Protein S19 forms a complex with S13 that binds strongly to the 16S ribosomal RNA. This Cellvibrio japonicus (strain Ueda107) (Pseudomonas fluorescens subsp. cellulosa) protein is Small ribosomal subunit protein uS19.